The primary structure comprises 416 residues: Peroxisomal isocitrate dehydrogenase [NADP] (416 aa).

Residues 77-79 and Arg84 contribute to the NADP(+) site; that span reads TIT. Position 79 (Thr79) interacts with substrate. Substrate-binding positions include 96-102, Arg111, and Arg134; that span reads SPNGTIR. Asp253 serves as a coordination point for Mn(2+). Residue Lys261 coordinates NADP(+). A Mn(2+)-binding site is contributed by Asp276. NADP(+) contacts are provided by residues 311-316 and Asn329; that span reads GTVTRH. The Peroxisomal targeting signal motif lies at 414-416; it reads SRL.

Belongs to the isocitrate and isopropylmalate dehydrogenases family. Mg(2+) is required as a cofactor. The cofactor is Mn(2+).

The protein localises to the peroxisome. The catalysed reaction is D-threo-isocitrate + NADP(+) = 2-oxoglutarate + CO2 + NADPH. In terms of biological role, may be involved in response to oxidative stresses. This Arabidopsis thaliana (Mouse-ear cress) protein is Peroxisomal isocitrate dehydrogenase [NADP] (ICDH).